Consider the following 100-residue polypeptide: Small ribosomal subunit protein uS14 (100 aa).

Belongs to the universal ribosomal protein uS14 family. As to quaternary structure, part of the 30S ribosomal subunit. Contacts proteins S3 and S10.

Functionally, binds 16S rRNA, required for the assembly of 30S particles and may also be responsible for determining the conformation of the 16S rRNA at the A site. The chain is Small ribosomal subunit protein uS14 from Gloeothece citriformis (strain PCC 7424) (Cyanothece sp. (strain PCC 7424)).